The primary structure comprises 165 residues: UPF0114 protein ESA_00283 (165 aa).

The next 3 helical transmembrane spans lie at 15-35 (LLAP…VKFF), 53-73 (LILL…LVMV), and 136-156 (LMWY…MGYL).

This sequence belongs to the UPF0114 family.

The protein localises to the cell membrane. The polypeptide is UPF0114 protein ESA_00283 (Cronobacter sakazakii (strain ATCC BAA-894) (Enterobacter sakazakii)).